The following is a 912-amino-acid chain: MWTLTCQQFIALILLGTLVPSESFLCKHCFRKNLEKVHESFRDILSPPIFGVNPQPLIEVQQPKVTPKPESSQVIHVHQPQVILKPIYYPKVDTISTKNQIGIHGPYSQYPSLLPSANLLGIPNQQLINAQDVLSDKDQKQTQVQNNNLHIRFGVSALREGRNNPSLETISRDKVDKISPALQLQLLRYADSQSQSQTQSQSASQSESNASSQFQAQEQSNRLLENPPVSESQSQSESQSQSESQKQSQSQSQRQQQIQTQLQILRQLQQKSNEQSAAQSASQIQSQRQSDSQSNLQLQEQSQSQSEQGKPIQSQIQILQGLQQKELDDKSASQSQSESKTRQEQQKQLNLQQLEELSSSLSQSRLGLGQQIQSQLQKNQLDKQFASQFQSQSKSQLEQQMQLQLQSLRQLQQKQLDEQSASQSQPQSQVAQQIQSHLQLLRLLQSRLKTQSALKSDLEQQILLQLKKLTEVQQKQLAEQPTLRPSSKSQSPGQLEQQILLQLQNLLQFQQNQLKSDTQTQSQLQESKSNSLSQSQSQSQEQLQLQRDQNLRQLEQIKLEMQNIRELLQKGKSELQTQSDSQRRIHELYQNILQLNKEKLSYQLKQLKLKELEDQKKSQAEISKGSNPSNLFIIGQLPSEGKPAPGNQGPSIEPKLVPQPGSLDKLPSGGGLIGKPASTGLYILSPDFNDLSDYRDQFRLQQELKKHQNILSLLQRRQNDIKKQQNAQLLLGQQQKEQQAQESINKQQSSSAGSSSQTKLQQDIQSTGAQGSQQGLQAGSTGLQTSSLQGTESSASQSAALQRLKEQEQLRIQTENDQKTSSSSSHSNSQNSQSSSSQSSQASQSEAQRQEAGNRNTLLLDQSSSKTQSESKSESSSQSSSHSSSQSTSNSSSNVQSKLQGESQALLNNLSG.

The N-terminal stretch at 1–23 (MWTLTCQQFIALILLGTLVPSES) is a signal peptide. 4 stretches are compositionally biased toward low complexity: residues 193 to 220 (QSQSQTQSQSASQSESNASSQFQAQEQS), 230 to 255 (SESQSQSESQSQSESQKQSQSQSQRQ), 271 to 324 (KSNE…GLQQ), and 521 to 544 (QSQLQESKSNSLSQSQSQSQEQLQ). 5 disordered regions span residues 193–255 (QSQS…SQRQ), 271–349 (KSNE…QKQL), 518–544 (TQTQSQLQESKSNSLSQSQSQSQEQLQ), 638–671 (PSEGKPAPGNQGPSIEPKLVPQPGSLDKLPSGGG), and 732–912 (GQQQ…NLSG). Composition is skewed to low complexity over residues 732 to 757 (GQQQKEQQAQESINKQQSSSAGSSSQ) and 765 to 785 (QSTGAQGSQQGLQAGSTGLQT). Residues 803 to 818 (RLKEQEQLRIQTENDQ) show a composition bias toward basic and acidic residues. Low complexity predominate over residues 821–845 (SSSSSHSNSQNSQSSSSQSSQASQS). Polar residues predominate over residues 851–861 (EAGNRNTLLLD). The segment covering 862–897 (QSSSKTQSESKSESSSQSSSHSSSQSTSNSSSNVQS) has biased composition (low complexity). A compositionally biased stretch (polar residues) spans 898–912 (KLQGESQALLNNLSG).

Proteolytically cleaved by the seminal metalloprotease Semp1. Cleavage appears to take place in the mated female. Detected in the male accessory glands (at protein level). Produced in the accessory glands and secreted into seminal fluid.

It localises to the secreted. In terms of biological role, responsible for physiological and behavioral changes in mated female flies. Associates with sperm and localizes to specific regions of the female reproductive tract, including the sperm storage organs. It accelerates sperm accumulation into storage but does not mediate the entry of the first sperm into storage. Once sperm storage has initiated it seems to act as a guidance factor helping subsequent sperm move into storage, a corral concentrating sperm around the SSO entrances and/or a trigger for responses within the female that accelerate storage of sperm. This Drosophila melanogaster (Fruit fly) protein is Accessory gland protein Acp36DE (Acp36DE).